A 244-amino-acid polypeptide reads, in one-letter code: Protein crossbronx (244 aa).

In terms of domain architecture, UBC core spans 20–176 (QQEYKILAEY…VQENIKESKE (157 aa)). The interval 209 to 244 (AGRSKQTEPSAQQGNGGHATGLSWVKEGEFKPLSIE) is disordered.

Belongs to the ubiquitin-conjugating enzyme family. FTS subfamily.

In Drosophila simulans (Fruit fly), this protein is Protein crossbronx (cbx).